The chain runs to 345 residues: S-adenosylmethionine:tRNA ribosyltransferase-isomerase (345 aa).

This sequence belongs to the QueA family. Monomer.

The protein resides in the cytoplasm. It catalyses the reaction 7-aminomethyl-7-carbaguanosine(34) in tRNA + S-adenosyl-L-methionine = epoxyqueuosine(34) in tRNA + adenine + L-methionine + 2 H(+). It functions in the pathway tRNA modification; tRNA-queuosine biosynthesis. Its function is as follows. Transfers and isomerizes the ribose moiety from AdoMet to the 7-aminomethyl group of 7-deazaguanine (preQ1-tRNA) to give epoxyqueuosine (oQ-tRNA). This Shewanella baltica (strain OS155 / ATCC BAA-1091) protein is S-adenosylmethionine:tRNA ribosyltransferase-isomerase.